The chain runs to 385 residues: Glucans biosynthesis protein C (385 aa).

Helical transmembrane passes span 17 to 37 (AWLM…SHTW), 60 to 80 (MQVF…RYPL), 91 to 111 (VGIP…IMLQ), 137 to 157 (ISHL…VWIF), 173 to 193 (KFSM…YAVI), 212 to 232 (FIVM…LAFI), 239 to 259 (LFTT…VAYL), 274 to 294 (TESV…FSFG), 311 to 331 (ASLF…AYIT), and 338 to 358 (WLGF…LYEI).

Belongs to the acyltransferase 3 family. OpgC subfamily.

The protein resides in the cell membrane. It functions in the pathway glycan metabolism; osmoregulated periplasmic glucan (OPG) biosynthesis. In terms of biological role, necessary for the succinyl substitution of periplasmic glucans. Could catalyze the transfer of succinyl residues from the cytoplasmic side of the membrane to the nascent glucan backbones on the periplasmic side of the membrane. The sequence is that of Glucans biosynthesis protein C from Escherichia coli O17:K52:H18 (strain UMN026 / ExPEC).